Consider the following 638-residue polypeptide: Octopamine receptor 1 (638 aa).

Residues 1-28 (MSRDIFMKRLRLHLLFDEVAMVTHIVGD) lie on the Extracellular side of the membrane. Residues 29–53 (VLSSVLLCAVVLLVLVGNTLVVAAV) traverse the membrane as a helical segment. The Cytoplasmic segment spans residues 54–64 (ATSRKLRTVTN). The chain crosses the membrane as a helical span at residues 65–87 (VFIVNLACADLLLGVLVLPFSAV). Topologically, residues 88 to 102 (NEIKDVWIFGHVWCQ) are extracellular. Cysteines 101 and 230 form a disulfide. The helical transmembrane segment at 103-124 (VWLAVDVWLCTASILNLCCISL) threads the bilayer. The Cytoplasmic portion of the chain corresponds to 125-147 (DRYLAITRPIRYPGLMSAKRAKT). The helical transmembrane segment at 148 to 167 (LVAGVWLFSFVICCPPLIGW) threads the bilayer. At 168-239 (NDGGDGIMDY…CELTNSRGYR (72 aa)) the chain is on the extracellular side. N-linked (GlcNAc...) asparagine glycosylation is found at Asn-178, Asn-207, and Asn-215. The helical transmembrane segment at 240 to 259 (IYAALGSFFIPMLVMVFFYL) threads the bilayer. Topologically, residues 260 to 520 (QIYRAAVKTI…FNREKKAAKT (261 aa)) are cytoplasmic. A helical membrane pass occupies residues 521–545 (LAIIVGAFIMCWMPFFTIYLVGAFC). Residues 546–551 (ENCISP) are Extracellular-facing. Residues 552–575 (IVFSVAFWLGYCNSAMNPCVYALF) traverse the membrane as a helical segment. Over 576 to 638 (SRDFRFAFRK…TASGGNGGYT (63 aa)) the chain is Cytoplasmic. Residues 618 to 638 (DDAKSSSDIGPTASGGNGGYT) form a disordered region.

The protein belongs to the G-protein coupled receptor 1 family. In terms of tissue distribution, expressed in the central nervous system.

It localises to the cell membrane. In terms of biological role, G-protein coupled receptor for octopamine (OA), which is a neurotransmitter, neurohormone, and neuromodulator in invertebrates. Activation of this receptor by octopamine induces an increase in both inositol phosphates and cyclic AMP. The coupling to adenylyl cyclase seems to be less efficient than the coupling to phospholipase C. The rank order of potency for agonists is p-synephrine &gt;= clonidine &gt; p-octopamine = xylometazoline = phenylephrine = oxymetazoline &gt; B-HT920 &gt; serotonin = p-tyramine &gt; epinephrine &gt; norepinephrine &gt; methoxamine = dopamine = histamine. For antagonists, the rank order is yohimbine &gt; chlopromazine / spiperone &gt; phentolamine &gt; mianserine &gt; rauwolscine &gt; prazosin &gt; alprenolol / propanolol &gt; pindolol. The chain is Octopamine receptor 1 from Lymnaea stagnalis (Great pond snail).